A 280-amino-acid chain; its full sequence is Proteasome subunit beta 2 (280 aa).

A propeptide spans 1–52 (MTERERGQGLPAEFFAVGTASFVELLSRTAPQLLPVNRVRDGSHPMPDIPHG) (removed in mature form; by autocatalysis). Residue T53 is the Nucleophile of the active site.

Belongs to the peptidase T1B family. As to quaternary structure, the 20S proteasome core is composed of 14 alpha and 14 beta subunits that assemble into four stacked heptameric rings, resulting in a barrel-shaped structure. The two inner rings, each composed of seven catalytic beta subunits, are sandwiched by two outer rings, each composed of seven alpha subunits. The catalytic chamber with the active sites is on the inside of the barrel. Has a gated structure, the ends of the cylinder being occluded by the N-termini of the alpha-subunits. Is capped by the proteasome-associated ATPase, ARC.

The protein localises to the cytoplasm. It carries out the reaction Cleavage of peptide bonds with very broad specificity.. It participates in protein degradation; proteasomal Pup-dependent pathway. Its activity is regulated as follows. The formation of the proteasomal ATPase ARC-20S proteasome complex, likely via the docking of the C-termini of ARC into the intersubunit pockets in the alpha-rings, may trigger opening of the gate for substrate entry. Interconversion between the open-gate and close-gate conformations leads to a dynamic regulation of the 20S proteasome proteolysis activity. In terms of biological role, component of the proteasome core, a large protease complex with broad specificity involved in protein degradation. In Thermomonospora curvata (strain ATCC 19995 / DSM 43183 / JCM 3096 / KCTC 9072 / NBRC 15933 / NCIMB 10081 / Henssen B9), this protein is Proteasome subunit beta 2.